We begin with the raw amino-acid sequence, 252 residues long: Small ribosomal subunit protein uS3 (252 aa).

A KH type-2 domain is found at 39–109; that stretch reads IRNYVNTRLK…EVKIDVVEVV (71 aa). Over residues 222-240 the composition is skewed to basic and acidic residues; sequence MKKIRDRRNDQRSRGGRDS. The segment at 222–252 is disordered; it reads MKKIRDRRNDQRSRGGRDSRNKRRRRPKNTA. Basic residues predominate over residues 241-252; the sequence is RNKRRRRPKNTA.

This sequence belongs to the universal ribosomal protein uS3 family. In terms of assembly, part of the 30S ribosomal subunit. Forms a tight complex with proteins S10 and S14.

Its function is as follows. Binds the lower part of the 30S subunit head. Binds mRNA in the 70S ribosome, positioning it for translation. The polypeptide is Small ribosomal subunit protein uS3 (Chlorobium phaeobacteroides (strain BS1)).